A 278-amino-acid chain; its full sequence is 4-deoxy-L-threo-5-hexosulose-uronate ketol-isomerase (278 aa).

His-196, His-198, Glu-203, and His-245 together coordinate Zn(2+).

It belongs to the KduI family. Zn(2+) is required as a cofactor.

The catalysed reaction is 5-dehydro-4-deoxy-D-glucuronate = 3-deoxy-D-glycero-2,5-hexodiulosonate. It functions in the pathway glycan metabolism; pectin degradation; 2-dehydro-3-deoxy-D-gluconate from pectin: step 4/5. Its function is as follows. Catalyzes the isomerization of 5-dehydro-4-deoxy-D-glucuronate to 3-deoxy-D-glycero-2,5-hexodiulosonate. In Shigella boydii serotype 4 (strain Sb227), this protein is 4-deoxy-L-threo-5-hexosulose-uronate ketol-isomerase.